Here is a 371-residue protein sequence, read N- to C-terminus: Collectin-46 (371 aa).

The signal sequence occupies residues Met1–Gly20. Residues Pro43 to Leu215 form a disordered region. The 171-residue stretch at Gly46–Ala216 folds into the Collagen-like domain. Over residues Asp51–Asp65 the composition is skewed to basic and acidic residues. Asn90 carries an N-linked (GlcNAc...) asparagine glycan. The segment covering Pro113–Pro128 has biased composition (low complexity). Gly residues predominate over residues Gly139–Gly148. The segment covering Ala170 to Ala191 has biased composition (low complexity). Basic and acidic residues predominate over residues Lys198 to Lys210. The Cell attachment site signature appears at Arg201 to Asp203. One can recognise a C-type lectin domain in the interval Gln273–Phe371. Intrachain disulfides connect Cys275/Cys369 and Cys347/Cys361.

It belongs to the SFTPD family. As to quaternary structure, oligomeric complex of 4 set of homotrimers. Post-translationally, hydroxylated. As to expression, highly expressed in thymus and liver.

The protein resides in the secreted. This chain is Collectin-46 (CL46), found in Bos taurus (Bovine).